We begin with the raw amino-acid sequence, 287 residues long: ATP synthase gamma chain (287 aa).

It belongs to the ATPase gamma chain family. As to quaternary structure, F-type ATPases have 2 components, CF(1) - the catalytic core - and CF(0) - the membrane proton channel. CF(1) has five subunits: alpha(3), beta(3), gamma(1), delta(1), epsilon(1). CF(0) has three main subunits: a, b and c.

The protein localises to the cell inner membrane. Its function is as follows. Produces ATP from ADP in the presence of a proton gradient across the membrane. The gamma chain is believed to be important in regulating ATPase activity and the flow of protons through the CF(0) complex. This is ATP synthase gamma chain from Geobacter metallireducens (strain ATCC 53774 / DSM 7210 / GS-15).